A 231-amino-acid chain; its full sequence is NADH-ubiquinone oxidoreductase chain 4 (231 aa).

The next 6 helical transmembrane spans lie at 1-21 (PIAG…YGII), 34-54 (LFLP…LTCL), 63-85 (IAYS…TPWG), 89-111 (AMAL…NTTY), 118-138 (ILIL…WWLL), and 156-176 (LLIM…LGLS).

It belongs to the complex I subunit 4 family.

It is found in the mitochondrion membrane. The enzyme catalyses a ubiquinone + NADH + 5 H(+)(in) = a ubiquinol + NAD(+) + 4 H(+)(out). Core subunit of the mitochondrial membrane respiratory chain NADH dehydrogenase (Complex I) that is believed to belong to the minimal assembly required for catalysis. Complex I functions in the transfer of electrons from NADH to the respiratory chain. The immediate electron acceptor for the enzyme is believed to be ubiquinone. This Ovophis okinavensis (Ryukyu Island pit viper) protein is NADH-ubiquinone oxidoreductase chain 4 (MT-ND4).